Reading from the N-terminus, the 331-residue chain is High-affinity nickel-transport protein NixA (331 aa).

Topologically, residues 1 to 5 (MKLWF) are cytoplasmic. Residues 6-26 (PYFLAIVFLHALGLALLFMAN) form a helical membrane-spanning segment. Topologically, residues 27 to 33 (NASFYAA) are periplasmic. Residues 34 to 54 (ASMAYMLGAKHAFDADHIACI) traverse the membrane as a helical segment. Over 55 to 66 (DNTIRKLTQQGK) the chain is Cytoplasmic. The helical transmembrane segment at 67-87 (NAYGVGFYFSMGHSSVVILMT) threads the bilayer. Over 88-113 (IISAFAIAWAKEHTPMLEEIGGVVGT) the chain is Periplasmic. The chain crosses the membrane as a helical span at residues 114-135 (LVSGLFLLIIGLLNAIILLDLL). At 136 to 178 (KIFKKSHSNESLSQQQNEEIERLLTSRGLLNRFFKPLFNFVSK) the chain is on the cytoplasmic side. The chain crosses the membrane as a helical span at residues 179–199 (SWHIYPIGFLFGLGFDTASEI). Residues 200 to 225 (ALLALSSSAIKVSMVGMLSLPILFAA) lie on the Periplasmic side of the membrane. The helical transmembrane segment at 226–246 (GMSLFDTLDGAFMLKAYDWAF) threads the bilayer. At 247–252 (KTPLRK) the chain is on the cytoplasmic side. A helical transmembrane segment spans residues 253–273 (IYYNISITALSVFIALFIGLI). Topologically, residues 274 to 302 (ELFQVVSEKLHLKFENRLLRALQSLEFTD) are periplasmic. The chain crosses the membrane as a helical span at residues 303 to 322 (LGYYLVGLFVIAFLGSFFLW). The Cytoplasmic portion of the chain corresponds to 323–331 (KIKFSKLES).

This sequence belongs to the NiCoT transporter (TC 2.A.52) family.

It is found in the cell inner membrane. Its function is as follows. High-affinity nickel intake protein. Imports nickel ions in an energy-dependent fashion. Necessary for the expression of catalytically active urease. The polypeptide is High-affinity nickel-transport protein NixA (nixA) (Helicobacter pylori (strain ATCC 700392 / 26695) (Campylobacter pylori)).